The sequence spans 123 residues: DNA-directed RNA polymerase I subunit RPA12 (123 aa).

Residues C17, C20, C35, C38, C84, and C87 each coordinate Zn(2+). The C4-type zinc-finger motif lies at 17–38 (CPDCGSVLPLPGVQDAVACTRC). The TFIIS-type zinc-finger motif lies at 80-120 (VDRRCSRCGHEGMAYHTRQMRSADEGQTVFYTCTNCKFQEK). A Hairpin motif is present at residues 103-104 (DE). Residues C112 and C115 each coordinate Zn(2+).

Belongs to the archaeal RpoM/eukaryotic RPA12/RPB9/RPC11 RNA polymerase family. In terms of assembly, component of the RNA polymerase I (Pol I) complex consisting of at least 13 subunits.

It is found in the nucleus. The protein resides in the nucleolus. In terms of biological role, core component of RNA polymerase I (Pol I), a DNA-dependent RNA polymerase which synthesizes ribosomal RNA precursors using the four ribonucleoside triphosphates as substrates. Can mediate Pol I proofreading of the nascent RNA transcript. Anchors into the Pol I active site to monitor transcription fidelity and cleave mis-incorporated 5'-ribonucleotides. This is DNA-directed RNA polymerase I subunit RPA12 from Bos taurus (Bovine).